The chain runs to 176 residues: Disulfide bond formation protein B (176 aa).

The Cytoplasmic segment spans residues 1–14 (MLRFLNRCSRGRGA). The chain crosses the membrane as a helical span at residues 15–31 (WLLLAFTALALELTALY). Over 32–49 (FQHVMLLKPCVLCIYQRS) the chain is Periplasmic. Cysteines 41 and 44 form a disulfide. A helical transmembrane segment spans residues 50–65 (ALWGVFAAGIVGAIAP). At 66 to 71 (SSLLRY) the chain is on the cytoplasmic side. A helical transmembrane segment spans residues 72–89 (PAIALWIYSSYEGIRLAW). At 90–144 (KHTDILLNPSPFTTCDFFVSFPSWLPLDKWLPAIFNATGDCSERQWSFLSMEMPQ) the chain is on the periplasmic side. Cysteines 104 and 130 form a disulfide. The helical transmembrane segment at 145–163 (WLLGIFAAYLLIAVLVLIA) threads the bilayer. Topologically, residues 164-176 (QPFRSKRRDLFSR) are cytoplasmic.

The protein belongs to the DsbB family.

Its subcellular location is the cell inner membrane. Functionally, required for disulfide bond formation in some periplasmic proteins. Acts by oxidizing the DsbA protein. This Pectobacterium atrosepticum (strain SCRI 1043 / ATCC BAA-672) (Erwinia carotovora subsp. atroseptica) protein is Disulfide bond formation protein B.